We begin with the raw amino-acid sequence, 632 residues long: Cytoplasmic polyadenylation element-binding protein 3 (632 aa).

Positions 1-11 (MQDDLLMDKSK) are enriched in basic and acidic residues. Disordered stretches follow at residues 1–89 (MQDD…TGGS) and 127–212 (FSPQ…RRAV). Positions 13–48 (QQRQQPQQPPSSQTQQQQKEAASVAEPPSSRESSPP) are enriched in low complexity. 2 stretches are compositionally biased toward polar residues: residues 65 to 89 (SFQQ…TGGS) and 135 to 169 (HQTQ…LTNK). The span at 170 to 193 (PSSSPNSSSPSPSNWNNQQNAAWN) shows a compositional bias: low complexity. RRM domains are found at residues 375–466 (RKVF…PWNL) and 483–565 (KTIF…PYVL).

The protein belongs to the RRM CPEB family. In terms of assembly, following synaptic activity, forms amyloid-like oligomers. Aggregation requires an intact actin cytoskeleton. In embryos, expressed in the central nervous system, and intermediate and distal pronephric tubule segments of the embryonic kidney.

It is found in the cytoplasm. The protein resides in the nucleus. It localises to the synapse. Its subcellular location is the cell projection. The protein localises to the dendrite. It is found in the postsynaptic density. Functionally, sequence-specific RNA-binding protein which acts as a translational repressor in the basal unstimulated state but, following neuronal stimulation, acts as a translational activator. Does not bind to the cytoplasmic polyadenylation element (CPE), a uridine-rich sequence element within the mRNA 3'-UTR, but binds to a U-rich loop within a stem-loop structure. Required for the consolidation and maintenance of hippocampal-based long term memory. Inhibits differentiation of intermediate mesoderm from an early stage to inhibit pronephric differentiation but induce neural differentiation. The sequence is that of Cytoplasmic polyadenylation element-binding protein 3 (cpeb3) from Xenopus tropicalis (Western clawed frog).